A 448-amino-acid polypeptide reads, in one-letter code: Fibulin-5 (448 aa).

Positions 1-23 (MPGLKRILTVTILALWLPHPGNA) are cleaved as a signal peptide. Residues 42-82 (DIDECRTIPEACRGDMMCVNQNGGYLCIPRTNPVYRGPYSN) form the EGF-like 1; calcium-binding domain. 17 disulfide bridges follow: cysteine 46–cysteine 59, cysteine 53–cysteine 68, cysteine 131–cysteine 144, cysteine 138–cysteine 153, cysteine 155–cysteine 166, cysteine 172–cysteine 181, cysteine 177–cysteine 190, cysteine 192–cysteine 205, cysteine 211–cysteine 221, cysteine 217–cysteine 230, cysteine 232–cysteine 245, cysteine 251–cysteine 262, cysteine 258–cysteine 271, cysteine 273–cysteine 286, cysteine 292–cysteine 305, cysteine 299–cysteine 314, and cysteine 320–cysteine 332. The short motif at 54–56 (RGD) is the Cell attachment site element. Residues 127–167 (DVDECATDSHQCNPTQICINTEGGYTCSCTDGYWLLEGQCL) form the EGF-like 2; calcium-binding domain. The EGF-like 3; calcium-binding domain maps to 168–206 (DIDECRYGYCQQLCANVPGSYSCTCNPGFTLNDDGRSCQ). In terms of domain architecture, EGF-like 4; calcium-binding spans 207-246 (DVNECETENPCVQTCVNTYGSFICRCDPGYELEEDGIHCS). Positions 245–448 (CSDMDECSFS…LRIYVSQYPF (204 aa)) are interaction with LOXL1. The 41-residue stretch at 247–287 (DMDECSFSEFLCQHECVNQPGSYFCSCPPGYVLLEDNRSCQ) folds into the EGF-like 5; calcium-binding domain. Residues asparagine 283 and asparagine 296 are each glycosylated (N-linked (GlcNAc...) asparagine). One can recognise an EGF-like 6; calcium-binding domain in the interval 288 to 333 (DINECEHRNHTCTPLQTCYNLQGGFKCIDPIVCEEPYLLIGDNRCM).

The protein belongs to the fibulin family. In terms of assembly, homodimer. Monomer, homodimerizes in presence of Ca(2+). Interacts with ELN. Interacts (via N-terminus) with the integrins ITGAV/ITGB3, ITGAV/ITGB5 and ITGA9/ITGB1. Interacts with FBN1 (via N-terminal domain). Forms a ternary complex with ELN and FBN1. Interacts with EFEMP2 with moderate affinity. Interacts with LOXL1. In terms of processing, N-glycosylated.

The protein localises to the secreted. Its subcellular location is the extracellular space. It is found in the extracellular matrix. Its function is as follows. Essential for elastic fiber formation, is involved in the assembly of continuous elastin (ELN) polymer and promotes the interaction of microfibrils and ELN. Stabilizes and organizes elastic fibers in the skin, lung and vasculature. Promotes adhesion of endothelial cells through interaction of integrins and the RGD motif. Vascular ligand for integrin receptors which may play a role in vascular development and remodeling. May act as an adapter that mediates the interaction between FBN1 and ELN. The chain is Fibulin-5 (Fbln5) from Rattus norvegicus (Rat).